The chain runs to 415 residues: JmjC domain-containing protein C (415 aa).

Residues 97–140 (NEKNNQSNNNNNNNNNNNNNNNNNNNNNNNNNNNNNNNNNNKPK) are disordered. Residues 104–137 (NNNNNNNNNNNNNNNNNNNNNNNNNNNNNNNNNN) are compositionally biased toward low complexity. A JmjC domain is found at 127–302 (NNNNNNNNNN…ELLKSNKLWC (176 aa)).

The chain is JmjC domain-containing protein C (jcdC) from Dictyostelium discoideum (Social amoeba).